A 709-amino-acid chain; its full sequence is Leucine-rich repeat-containing protein 4B (709 aa).

A signal peptide spans 1–38 (MAQAHIQGSPCPLLPPGRMSWPQGALLLLWLFSPPLRA). In terms of domain architecture, LRRNT spans 50 to 88 (GGGSPPATSCPAACSCSNQASRVICTRRELAEVPASIPV). 9 LRR repeats span residues 89–110 (NTRY…TFKH), 113–134 (HLEI…AFNG), 137–158 (SLNT…AFEY), 161–182 (KLRE…AFNR), 185–207 (SLRR…AFEG), 210–231 (NLRY…TALV), 232–253 (RLEE…SFQG), 256–277 (SLRK…AFDD), and 280–301 (SLEE…LFTP). The LRRCT domain occupies 313–365 (NPWHCNCDVLWLSWWLKETVPSNTTCCARCHAPAGLKGRYIGELDQSHFTCYA). The Ig-like C2-type domain maps to 366–454 (PVIVEPPTDL…GNTTASATLN (89 aa)). 5 N-linked (GlcNAc...) asparagine glycosylation sites follow: Asn-376, Asn-402, Asn-424, Asn-427, and Asn-446. Cysteines 387 and 438 form a disulfide. Residues 496-552 (TQPGEEAQQPRGTEKEPPGPTTDGAWGGGRPDAAAPASASTTAPAPRSSRPTEKAFT) form a disordered region. Over residues 528–544 (AAAPASASTTAPAPRSS) the composition is skewed to low complexity. A helical transmembrane segment spans residues 575-595 (IIIGCFVAITFMAAVMLVAFY). Position 689 is a phosphoserine (Ser-689).

As to quaternary structure, interacts with PTPRF. Interacts with DLG4. Post-translationally, N-glycosylated. O-glycosylated; contains sialic acid. As to expression, mainly expressed in the brain. Widespread distribution in various brain regions (at protein level). Detected both embryonically and postnatally with stronger expression in postnatal stages.

The protein localises to the membrane. The protein resides in the presynaptic cell membrane. Its function is as follows. Synaptic adhesion protein. Regulates the formation of excitatory synapses. The trans-synaptic adhesion between LRRC4B and PTPRF regulates the formation of excitatory synapses in a bidirectional manner. In Rattus norvegicus (Rat), this protein is Leucine-rich repeat-containing protein 4B (Lrrc4b).